A 1839-amino-acid polypeptide reads, in one-letter code: Non-structural replication polyprotein (1839 aa).

The Alphavirus-like MT domain occupies 58–219; the sequence is SGLGVTPHPH…NQPLQAPSWL (162 aa). Disordered stretches follow at residues 253–277, 578–623, and 645–703; these read PKPS…PNSQ, AQAS…PLTR, and TSAE…PSGA. The span at 584 to 599 shows a compositional bias: pro residues; that stretch reads APRPPAFHAIPLPPQP. Low complexity predominate over residues 600 to 614; the sequence is STSSSPPLQEPTLSP. Pro residues predominate over residues 652 to 670; it reads PLNPPTPSPTPDVPPPDSP. One can recognise a Peptidase C21 domain in the interval 723–877; the sequence is SHPFTPLADD…RLAASAPRCN (155 aa). Residues cysteine 776 and histidine 862 each act as for protease activity in the active site. The region spanning 935–1092 is the (+)RNA virus helicase ATP-binding domain; it reads KGPSPREKLT…RFKSYIDCYC (158 aa). Residue 965-972 participates in ATP binding; sequence GFAGCGKT. Residues 1093–1224 enclose the (+)RNA virus helicase C-terminal domain; it reads FWSHRIPKQI…GTIDLNNVFP (132 aa). The RdRp catalytic domain maps to 1567-1673; sequence SSYIANDYTA…CGTPPPSPLW (107 aa).

This sequence belongs to the Tymoviridae non-structural replication polyprotein family. Specific enzymatic cleavages by the host yield mature proteins.

The enzyme catalyses RNA(n) + a ribonucleoside 5'-triphosphate = RNA(n+1) + diphosphate. Functionally, acts as a cysteine protease, methyltransferase and deubiquitinase. The cysteine protease activity cleaves the polyprotein giving rise to mature proteins. The methyltransferase domain is probably involved in viral RNA capping. In terms of biological role, RNA-directed RNA polymerase is responsible for the replication and transcription of the genome. The protein is Non-structural replication polyprotein of Solanum lycopersicum (Tomato).